The primary structure comprises 140 residues: Methylglyoxal synthase (140 aa).

The MGS-like domain occupies 1–140; that stretch reads MKIALIAHDK…RGRKGEINGL (140 aa). Substrate-binding positions include histidine 8, lysine 12, 34–37, and 54–55; these read TGTT and SG. Aspartate 60 functions as the Proton donor/acceptor in the catalytic mechanism. Histidine 87 is a substrate binding site.

It belongs to the methylglyoxal synthase family.

It carries out the reaction dihydroxyacetone phosphate = methylglyoxal + phosphate. Catalyzes the formation of methylglyoxal from dihydroxyacetone phosphate. In Geobacillus sp. (strain WCH70), this protein is Methylglyoxal synthase.